The following is a 267-amino-acid chain: 4-hydroxy-tetrahydrodipicolinate reductase (267 aa).

NAD(+) is bound by residues 9–14 and D35; that span reads GVSGRM. R36 lines the NADP(+) pocket. NAD(+) is bound by residues 98 to 100 and 122 to 125; these read GTT and APNM. H155 serves as the catalytic Proton donor/acceptor. H156 is a (S)-2,3,4,5-tetrahydrodipicolinate binding site. The Proton donor role is filled by K159. 165 to 166 provides a ligand contact to (S)-2,3,4,5-tetrahydrodipicolinate; sequence GT.

This sequence belongs to the DapB family.

It is found in the cytoplasm. The catalysed reaction is (S)-2,3,4,5-tetrahydrodipicolinate + NAD(+) + H2O = (2S,4S)-4-hydroxy-2,3,4,5-tetrahydrodipicolinate + NADH + H(+). The enzyme catalyses (S)-2,3,4,5-tetrahydrodipicolinate + NADP(+) + H2O = (2S,4S)-4-hydroxy-2,3,4,5-tetrahydrodipicolinate + NADPH + H(+). It participates in amino-acid biosynthesis; L-lysine biosynthesis via DAP pathway; (S)-tetrahydrodipicolinate from L-aspartate: step 4/4. Functionally, catalyzes the conversion of 4-hydroxy-tetrahydrodipicolinate (HTPA) to tetrahydrodipicolinate. The sequence is that of 4-hydroxy-tetrahydrodipicolinate reductase from Thiobacillus denitrificans (strain ATCC 25259 / T1).